Here is a 73-residue protein sequence, read N- to C-terminus: Translation initiation factor IF-1 (73 aa).

The S1-like domain maps to 1-72 (MSKDDLIQFT…TKGRVILRHQ (72 aa)).

Belongs to the IF-1 family. In terms of assembly, component of the 30S ribosomal translation pre-initiation complex which assembles on the 30S ribosome in the order IF-2 and IF-3, IF-1 and N-formylmethionyl-tRNA(fMet); mRNA recruitment can occur at any time during PIC assembly.

The protein localises to the cytoplasm. In terms of biological role, one of the essential components for the initiation of protein synthesis. Stabilizes the binding of IF-2 and IF-3 on the 30S subunit to which N-formylmethionyl-tRNA(fMet) subsequently binds. Helps modulate mRNA selection, yielding the 30S pre-initiation complex (PIC). Upon addition of the 50S ribosomal subunit IF-1, IF-2 and IF-3 are released leaving the mature 70S translation initiation complex. The protein is Translation initiation factor IF-1 of Rickettsia bellii (strain OSU 85-389).